The sequence spans 274 residues: Secreted RxLR effector protein 144 (274 aa).

The first 20 residues, 1–20 (MRPWLLLLVGLSSFFALSTS), serve as a signal peptide directing secretion. The RxLR-dEER signature appears at 49-72 (RKLRAFGGDTNTLKDSGKARREEK).

This sequence belongs to the RxLR effector family.

The protein localises to the secreted. It is found in the host nucleus. It localises to the host cytoplasm. Functionally, secreted effector that completely suppresses the host cell death induced by cell death-inducing proteins. The protein is Secreted RxLR effector protein 144 of Plasmopara viticola (Downy mildew of grapevine).